The primary structure comprises 142 residues: Sec-independent protein translocase protein TatB (142 aa).

A helical membrane pass occupies residues 1–21 (MFDFGFSELVVIGVVMLIVVG). Residues 99-142 (AAPPDNTTSAESQAAADPAAVDSSQQLELRLDTTPKQVVGSDKA) are disordered. Residues 107–124 (SAESQAAADPAAVDSSQQ) are compositionally biased toward low complexity.

This sequence belongs to the TatB family. The Tat system comprises two distinct complexes: a TatABC complex, containing multiple copies of TatA, TatB and TatC subunits, and a separate TatA complex, containing only TatA subunits. Substrates initially bind to the TatABC complex, which probably triggers association of the separate TatA complex to form the active translocon.

It is found in the cell inner membrane. Part of the twin-arginine translocation (Tat) system that transports large folded proteins containing a characteristic twin-arginine motif in their signal peptide across membranes. Together with TatC, TatB is part of a receptor directly interacting with Tat signal peptides. TatB may form an oligomeric binding site that transiently accommodates folded Tat precursor proteins before their translocation. The sequence is that of Sec-independent protein translocase protein TatB from Azoarcus sp. (strain BH72).